A 579-amino-acid polypeptide reads, in one-letter code: Lens epithelium-derived growth factor (579 aa).

One can recognise a PWWP domain in the interval 1-64 (MSRDFKPGDL…PKDIFPYSEN (64 aa)). Disordered regions lie at residues 62–81 (SENK…NEGL), 88–203 (PKVK…EEAA), 215–397 (AAPV…SMDS), and 492–579 (AEQK…FENK). Residues 94-107 (HQPSHPAVNTSIKE) show a composition bias toward polar residues. The segment covering 153–173 (KEMHSTKEDEEPSEKNSKEGV) has biased composition (basic and acidic residues). Over residues 184-193 (VARRGRKRKA) the composition is skewed to basic residues. The Nuclear localization signal signature appears at 186-196 (RRGRKRKAEKQ). A compositionally biased stretch (low complexity) spans 215-224 (AAPVTVSPKV). The span at 261–308 (EEEKAKKKGPDEKPKKQGKKDEEGQKEEEKPKKEYDKKDGKKEAEPKR) shows a compositional bias: basic and acidic residues. Residues 321 to 330 (DSEDEGGEEE) show a composition bias toward acidic residues. Residues 334–349 (KKKGGRSFQSTHRRNI) are compositionally biased toward basic residues. The stretch at 347–442 (RNIMRGQHEK…SMQQAQKHTE (96 aa)) forms a coiled coil. 2 stretches are compositionally biased toward basic and acidic residues: residues 352–397 (GQHE…SMDS) and 492–522 (AEQK…KDQT). Positions 387–464 (MEKKRETSMD…VSQVIMEKST (78 aa)) are integrase-binding domain (IBD). A compositionally biased stretch (polar residues) spans 530 to 543 (GSETQDTNQSQHNG). Basic and acidic residues predominate over residues 544–579 (ENAEEKDKLEVASKKKTCGEESELEKPAKESAFENK).

It belongs to the HDGF family.

The protein resides in the nucleus. Functionally, transcriptional coactivator involved in neuroepithelial stem cell differentiation and neurogenesis. Involved in particular in lens epithelial cell gene regulation and stress responses. May play an important role in lens epithelial to fiber cell terminal differentiation. May play a protective role during stress-induced apoptosis. The polypeptide is Lens epithelium-derived growth factor (PSIP1) (Gallus gallus (Chicken)).